The sequence spans 157 residues: Cytochrome c-type biogenesis protein CcmE (157 aa).

Topologically, residues 1–7 are cytoplasmic; sequence MTPRQRR. The helical; Signal-anchor for type II membrane protein transmembrane segment at 8–28 threads the bilayer; it reads LGLLAAALACCGVAAALVLNA. The Periplasmic segment spans residues 29–157; sequence FRANLVFFFS…GAMAAQELRR (129 aa). Heme is bound by residues H123 and Y127.

It belongs to the CcmE/CycJ family.

The protein localises to the cell inner membrane. Its function is as follows. Heme chaperone required for the biogenesis of c-type cytochromes. Transiently binds heme delivered by CcmC and transfers the heme to apo-cytochromes in a process facilitated by CcmF and CcmH. The protein is Cytochrome c-type biogenesis protein CcmE of Cupriavidus taiwanensis (strain DSM 17343 / BCRC 17206 / CCUG 44338 / CIP 107171 / LMG 19424 / R1) (Ralstonia taiwanensis (strain LMG 19424)).